Here is a 323-residue protein sequence, read N- to C-terminus: Caspase-1 (323 aa).

A propeptide spanning residues 1–33 is cleaved from the precursor; that stretch reads MTDECVTRNYGVGIRSPNGSENRGSFIMADNTD. Residues His154 and Cys196 contribute to the active site. Positions 203 to 215 are excised as a propeptide; sequence GGITLEKGVTETD.

The protein belongs to the peptidase C14A family. Heterotetramer that consists of two anti-parallel arranged heterodimers, each one formed by a 22 kDa (p22) and a 13 kDa (p13) subunit.

In terms of biological role, involved in the activation cascade of caspases responsible for apoptosis execution. Proteolytically cleaves poly(ADP-ribose) polymerase (PARP). Loss of zygotic DCP-1 function causes larval lethality and melanotic tumors. The sequence is that of Caspase-1 (Dcp-1) from Drosophila melanogaster (Fruit fly).